The primary structure comprises 1028 residues: RNA cytidine acetyltransferase 2 (1028 aa).

ATP contacts are provided by residues 286-295 (GRGKSAALGL) and Arg-458. The N-acetyltransferase domain occupies 546–729 (VLLGPVDESQ…FAPFYVSQIP (184 aa)). Acetyl-CoA-binding positions include 617–619 (IAV), 624–630 (MKMGYGS), and Lys-717. Positions 982–1028 (SGIISVKSTKSENENGFDKSTKKRSSDKRSSSSSKSKSSKKRKSLKE) are disordered. Basic and acidic residues predominate over residues 990–1001 (TKSENENGFDKS). Residues 1018 to 1028 (KSSKKRKSLKE) show a composition bias toward basic residues.

This sequence belongs to the RNA cytidine acetyltransferase family. NAT10 subfamily.

It is found in the nucleus. It localises to the nucleolus. The catalysed reaction is a cytidine in 18S rRNA + acetyl-CoA + ATP + H2O = an N(4)-acetylcytidine in 18S rRNA + ADP + phosphate + CoA + H(+). It catalyses the reaction a cytidine in tRNA + acetyl-CoA + ATP + H2O = an N(4)-acetylcytidine in tRNA + ADP + phosphate + CoA + H(+). In terms of biological role, RNA cytidine acetyltransferase with specificity toward both 18S rRNA and tRNAs. Catalyzes the formation of N(4)-acetylcytidine (ac4C) in 18S rRNA. Required for early nucleolar cleavages of precursor rRNA at sites A0, A1 and A2 during 18S rRNA synthesis. Catalyzes the formation of ac4C in serine and leucine tRNAs. Requires a tRNA-binding adapter protein for full tRNA acetyltransferase activity but not for 18S rRNA acetylation. This Arabidopsis thaliana (Mouse-ear cress) protein is RNA cytidine acetyltransferase 2.